The following is a 104-amino-acid chain: Large ribosomal subunit protein uL24 (104 aa).

This sequence belongs to the universal ribosomal protein uL24 family. In terms of assembly, part of the 50S ribosomal subunit.

One of two assembly initiator proteins, it binds directly to the 5'-end of the 23S rRNA, where it nucleates assembly of the 50S subunit. In terms of biological role, one of the proteins that surrounds the polypeptide exit tunnel on the outside of the subunit. The polypeptide is Large ribosomal subunit protein uL24 (Herminiimonas arsenicoxydans).